The primary structure comprises 331 residues: GATA transcription factor 12 (331 aa).

Disordered regions lie at residues Glu30–Phe49 and Ser105–Ala138. Low complexity predominate over residues Val34–Ser47. Polar residues predominate over residues Asp116–Val134. Residues Lys139–Arg146 carry the Nuclear localization signal motif. The interval Ser174 to Glu218 is disordered. A GATA-type zinc finger spans residues Gly215–Leu269.

The protein belongs to the type IV zinc-finger family. Class A subfamily. As to expression, expressed in the vascular cylinder of roots. Expressed in the differentiation zone of the root stele.

It localises to the nucleus. Transcriptional activator that specifically binds 5'-GATA-3' or 5'-GAT-3' motifs within gene promoters. May be involved in the regulation of some light-responsive genes. Transcription activator involved in xylem formation. Functions upstream of NAC030/VND7, a master switch of xylem vessel differentiation. The polypeptide is GATA transcription factor 12 (Arabidopsis thaliana (Mouse-ear cress)).